Reading from the N-terminus, the 155-residue chain is Riboflavin kinase (155 aa).

4 residues coordinate ATP: glycine 15, lysine 21, threonine 27, and asparagine 29. Residues threonine 27 and asparagine 29 each coordinate Mg(2+). Glutamate 79 (nucleophile) is an active-site residue. ATP contacts are provided by isoleucine 82, histidine 84, and tyrosine 91. Positions 104, 107, and 109 each coordinate FMN.

As to quaternary structure, monomer. Directly interacts with TNFRSF1A death domain; this interaction may be supported by TRADD. In the absence of TNFRSF1A, interacts with TRADD. Independently of TNFRSF1A, interacts with the NADPH oxidase subunit CYBA. Zn(2+) serves as cofactor. Requires Mg(2+) as cofactor.

The protein resides in the cytoplasm. The enzyme catalyses riboflavin + ATP = FMN + ADP + H(+). Its pathway is cofactor biosynthesis; FMN biosynthesis; FMN from riboflavin (ATP route): step 1/1. Catalyzes the phosphorylation of riboflavin (vitamin B2) to form flavin-mononucleotide (FMN), hence rate-limiting enzyme in the synthesis of FAD. Essential for TNF-induced reactive oxygen species (ROS) production. Through its interaction with both TNFRSF1A and CYBA, physically and functionally couples TNFRSF1A to NADPH oxidase. TNF-activation of RFK may enhance the incorporation of FAD in NADPH oxidase, a critical step for the assembly and activation of NADPH oxidase. This chain is Riboflavin kinase (Rfk), found in Mus musculus (Mouse).